Consider the following 355-residue polypeptide: Epoxyqueuosine reductase (355 aa).

Residue D143 is the Proton donor of the active site. The 33-residue stretch at 185–217 (LPLPIDTPATAHCGTCTRCIDICPTQAIIAPHR) folds into the 4Fe-4S ferredoxin-type domain. Residues C197, C200, C203, C207, C223, C250, C253, and C257 each coordinate [4Fe-4S] cluster.

This sequence belongs to the QueG family. In terms of assembly, monomer. Cob(II)alamin is required as a cofactor. It depends on [4Fe-4S] cluster as a cofactor.

It is found in the cytoplasm. The catalysed reaction is epoxyqueuosine(34) in tRNA + AH2 = queuosine(34) in tRNA + A + H2O. Its pathway is tRNA modification; tRNA-queuosine biosynthesis. Functionally, catalyzes the conversion of epoxyqueuosine (oQ) to queuosine (Q), which is a hypermodified base found in the wobble positions of tRNA(Asp), tRNA(Asn), tRNA(His) and tRNA(Tyr). This is Epoxyqueuosine reductase from Xanthomonas campestris pv. campestris (strain ATCC 33913 / DSM 3586 / NCPPB 528 / LMG 568 / P 25).